A 549-amino-acid polypeptide reads, in one-letter code: DNA polymerase lambda (549 aa).

The 100-residue stretch at 17-116 (DPDGMFRGVS…ERLPEHKFAI (100 aa)) folds into the BRCT domain. Positions 126–197 (KEGGAAGSGV…ASGDSKETIA (72 aa)) are disordered. Residues 149-175 (PENRKETAGGNRESRDAIAHPNEDSDV) show a composition bias toward basic and acidic residues. A compositionally biased stretch (polar residues) spans 180-197 (STCTSSQSASGDSKETIA). Positions 233-247 (NIYRALGDDRRSFSY) are DNA-binding. Residue His-280 is part of the active site. A DNA-binding region spans residues 315–318 (GPAT). Residues Arg-356, 387–390 (SYRR), and 396–399 (GDMD) each bind dCTP. The interval 390-399 (RGKSSCGDMD) is involved in primer binding. The Mn(2+) site is built by Asp-397, Asp-399, and Asp-464. Residues 438-479 (IEGTDCGVDTYFGLCTYPGRELRHRIDLKVYPRNRHAFGLLA) are DNA-binding. DCTP is bound at residue Asn-487.

Belongs to the DNA polymerase type-X family. In terms of assembly, interacts with PCNA. Requires Mn(2+) as cofactor. In terms of tissue distribution, expressed in proliferating tissues. Expressed in roots, root apex, young leaves, shoot apical meristem (SAM), flag leaves and panicles.

Its subcellular location is the nucleus. It catalyses the reaction DNA(n) + a 2'-deoxyribonucleoside 5'-triphosphate = DNA(n+1) + diphosphate. In terms of biological role, repair polymerase involved in base excision repair (BER) and responsible for repair of lesions that give rise to abasic (AP) sites in DNA. Has both DNA polymerase and terminal transferase activities. Has a 5'-deoxyribose-5-phosphate lyase (dRP lyase) activity. The sequence is that of DNA polymerase lambda from Oryza sativa subsp. japonica (Rice).